We begin with the raw amino-acid sequence, 299 residues long: Homoserine O-acetyltransferase (299 aa).

Residue C142 is the Acyl-thioester intermediate of the active site. 2 residues coordinate substrate: K163 and S192. H235 serves as the catalytic Proton acceptor. Residue E237 is part of the active site. A substrate-binding site is contributed by R249.

It belongs to the MetA family.

The protein resides in the cytoplasm. The catalysed reaction is L-homoserine + acetyl-CoA = O-acetyl-L-homoserine + CoA. Its pathway is amino-acid biosynthesis; L-methionine biosynthesis via de novo pathway; O-acetyl-L-homoserine from L-homoserine: step 1/1. Functionally, transfers an acetyl group from acetyl-CoA to L-homoserine, forming acetyl-L-homoserine. The chain is Homoserine O-acetyltransferase from Synechococcus sp. (strain ATCC 27144 / PCC 6301 / SAUG 1402/1) (Anacystis nidulans).